A 337-amino-acid polypeptide reads, in one-letter code: tRNA N6-adenosine threonylcarbamoyltransferase (337 aa).

Fe cation is bound by residues histidine 111 and histidine 115. Residues 134 to 138 (LVSGG), aspartate 167, glycine 180, and asparagine 272 contribute to the substrate site. Aspartate 300 contacts Fe cation.

This sequence belongs to the KAE1 / TsaD family. It depends on Fe(2+) as a cofactor.

It is found in the cytoplasm. It catalyses the reaction L-threonylcarbamoyladenylate + adenosine(37) in tRNA = N(6)-L-threonylcarbamoyladenosine(37) in tRNA + AMP + H(+). Required for the formation of a threonylcarbamoyl group on adenosine at position 37 (t(6)A37) in tRNAs that read codons beginning with adenine. Is involved in the transfer of the threonylcarbamoyl moiety of threonylcarbamoyl-AMP (TC-AMP) to the N6 group of A37, together with TsaE and TsaB. TsaD likely plays a direct catalytic role in this reaction. The chain is tRNA N6-adenosine threonylcarbamoyltransferase from Methylococcus capsulatus (strain ATCC 33009 / NCIMB 11132 / Bath).